We begin with the raw amino-acid sequence, 536 residues long: REST corepressor 2 (536 aa).

The interval 1–44 (MERSGSGVLSRSRAKTVTNGNSQHSEEESSDEEHPNDSMIRVGG) is disordered. Residues 24–36 (HSEEESSDEEHPN) are compositionally biased toward basic and acidic residues. Residues 38-123 (SMIRVGGDYQ…KSLADLANFT (86 aa)) form the ELM2 domain. An SANT 1 domain is found at 124-175 (PFPDEWTVEDKVLFEQAFSFHGKSFHRIQQMLPDKMITSLVKYYYSWKKTRT). The disordered stretch occupies residues 179–264 (VMDRQARKLL…RARRRPPKGM (86 aa)). Residues 197 to 211 (NDEIEEGDPGSDSDF) are compositionally biased toward acidic residues. Over residues 249–262 (YRHHPLRARRRPPK) the composition is skewed to basic residues. Residues 283 to 315 (VTIRQLDTQLVSLKRQVQKIKQTNSVLRNNLGD) adopt a coiled-coil conformation. An SANT 2 domain is found at 328-379 (KINSRWTTEEQLLAVQAVRRYGKDFAAIADVIGNKTVAQVSSFFVSYRRRFN). The interval 389–536 (AEQEVQGSSG…GLKVESPQSH (148 aa)) is disordered. The segment covering 391–406 (QEVQGSSGRTVNTELN) has biased composition (polar residues). Residues 422–449 (SPPHSDSPLPSSEGSASGNHSSAQSSPP) are compositionally biased toward low complexity. Positions 450–476 (LTQPPPLLRPAPPSAPPSLLRQPPPLQ) are enriched in pro residues.

It belongs to the CoREST family.

Its subcellular location is the nucleus. Functionally, may act as a component of a corepressor complex that represses transcription. The sequence is that of REST corepressor 2 (rcor2) from Danio rerio (Zebrafish).